The primary structure comprises 96 residues: Cytochrome b (96 aa).

3 helical membrane-spanning segments follow: residues 1-15 (LCXI…FLAM), 39-60 (WLIR…YLHI), and 75-95 (WNVG…GYVL). Heme b contacts are provided by His45 and His59.

The protein belongs to the cytochrome b family. In terms of assembly, the cytochrome bc1 complex contains 3 respiratory subunits (MT-CYB, CYC1 and UQCRFS1), 2 core proteins (UQCRC1 and UQCRC2) and probably 6 low-molecular weight proteins. Heme b serves as cofactor.

The protein resides in the mitochondrion inner membrane. In terms of biological role, component of the ubiquinol-cytochrome c reductase complex (complex III or cytochrome b-c1 complex) that is part of the mitochondrial respiratory chain. The b-c1 complex mediates electron transfer from ubiquinol to cytochrome c. Contributes to the generation of a proton gradient across the mitochondrial membrane that is then used for ATP synthesis. The chain is Cytochrome b (mt-cyb) from Geophagus steindachneri (Red hump earth eater).